The following is a 358-amino-acid chain: Photosystem II protein D1 (358 aa).

The next 3 membrane-spanning stretches (helical) occupy residues 28–45 (YVGW…AAAI), 117–132 (HFLI…QWEL), and 141–155 (WICV…AAFA). Residue His-117 coordinates chlorophyll a. Pheophytin a is bound at residue Trp-125. 2 residues coordinate [CaMn4O5] cluster: Asp-169 and Glu-188. Residues 196–217 (FHMIGVAGMFGGSLFSAMHGSL) form a helical membrane-spanning segment. His-197 contributes to the chlorophyll a binding site. A quinone-binding positions include His-214 and 263–264 (SF). Fe cation is bound at residue His-214. A Fe cation-binding site is contributed by His-271. A helical transmembrane segment spans residues 273 to 287 (FLAAWPVICIWITSL). Positions 331, 332, 341, and 343 each coordinate [CaMn4O5] cluster. The propeptide occupies 344–358 (AAESTPVALIAPAIG).

This sequence belongs to the reaction center PufL/M/PsbA/D family. In terms of assembly, PSII is composed of 1 copy each of membrane proteins PsbA, PsbB, PsbC, PsbD, PsbE, PsbF, PsbH, PsbI, PsbJ, PsbK, PsbL, PsbM, PsbT, PsbX, PsbY, Psb30/Ycf12, peripheral proteins PsbO, CyanoQ (PsbQ), PsbU, PsbV and a large number of cofactors. It forms dimeric complexes. Requires The D1/D2 heterodimer binds P680, chlorophylls that are the primary electron donor of PSII, and subsequent electron acceptors. It shares a non-heme iron and each subunit binds pheophytin, quinone, additional chlorophylls, carotenoids and lipids. D1 provides most of the ligands for the Mn4-Ca-O5 cluster of the oxygen-evolving complex (OEC). There is also a Cl(-1) ion associated with D1 and D2, which is required for oxygen evolution. The PSII complex binds additional chlorophylls, carotenoids and specific lipids. as cofactor. Tyr-160 forms a radical intermediate that is referred to as redox-active TyrZ, YZ or Y-Z. In terms of processing, C-terminally processed by CtpA; processing is essential to allow assembly of the oxygen-evolving complex and thus photosynthetic growth.

It localises to the cellular thylakoid membrane. The catalysed reaction is 2 a plastoquinone + 4 hnu + 2 H2O = 2 a plastoquinol + O2. Photosystem II (PSII) is a light-driven water:plastoquinone oxidoreductase that uses light energy to abstract electrons from H(2)O, generating O(2) and a proton gradient subsequently used for ATP formation. It consists of a core antenna complex that captures photons, and an electron transfer chain that converts photonic excitation into a charge separation. The D1/D2 (PsbA/PsbD) reaction center heterodimer binds P680, the primary electron donor of PSII as well as several subsequent electron acceptors. This is Photosystem II protein D1 from Prochlorococcus marinus (strain MIT 9313).